The sequence spans 290 residues: MNHFVYLMDKYGNPYSFSLKPKYYKTLVLSGGAMRGVYLLGALNGLKIKINKISTFIGISSGSIICFLLSIGYTPYEIFISLLKYDNLLTINLDKLYSGDTRNEGGLFSSENIFKHLETQMRLKEISRSITFKEHFEKTGKILIVMAFNITKCKEDIFTYETTPDMEILNSLKLSARIPIIFGPIKYNNNFYIDGGVWNNFPIDIAIKYHNKKNKKKSDWIIAVTTLFSTYKQNIHQWYKFSNINIVMVNDTPDLNPSLVSSDLEKLTMFNKGEEKASLIKKQNIRRNSI.

A run of 2 helical transmembrane segments spans residues T26–L46 and I53–Y73. Residues L27–I207 form the PNPLA domain. The GXSXG signature appears at G58–G62. S60 (nucleophile) is an active-site residue. D194 serves as the catalytic Proton acceptor. Residues D194–G196 carry the DGA/G motif.

It is found in the membrane. Its function is as follows. Probable lipid hydrolase. The protein is Probable lipid hydrolase 463L of Invertebrate iridescent virus 6 (IIV-6).